We begin with the raw amino-acid sequence, 4069 residues long: Cardiomyopathy-associated protein 5 (4069 aa).

Disordered stretches follow at residues 1-177, 341-387, 442-525, 538-558, 597-705, 732-793, 844-872, 890-948, 979-1009, 1041-1097, 1160-1179, 1205-1237, 1540-1575, 1594-1742, 1757-1809, 1892-1988, 2064-2175, 2187-2259, 2385-2412, 2425-2463, 2494-2527, 2653-2706, and 2750-2862; these read MASR…SQVL, TVPS…DTPA, GLAA…EDSN, ESPLVSEKPFPPHMSPEVEHK, EYSV…VPSL, PSEE…RFTP, SSPDLVVASEHSFPPHTTEMTSECQAPPL, LERY…FSPD, TSPSEHTILSDEDTEEAELFSPDSASQVSIP, ADEE…PEIP, VKEETKPASPHSVLPDSVPA, RKEEIVPDSQEATAHVSQDQKMEPQPPNVPESE, KETELPSSQNVSPASKHIIPKGKDEETASSSPELEN, PAVE…EEFQ, HPAD…ITEP, ENWM…VKLA, TISS…KKGI, FGSS…SGDG, PQQPKSASSNFASKNITKESEKPESIIL, SEDRLKKEMQNPTSLKISEEETKLRSVSPTEKKDNLENR, TQITLGSRSTELKESKADAMPQHFYQNEDYNERP, QEGN…VGTQ, and SSRD…SDVP. A compositionally biased stretch (acidic residues) spans 27-47; it reads ETEEESEGEEDETAAESEEEP. A compositionally biased stretch (basic and acidic residues) spans 48-62; it reads DSRLSDQDEEGKIKQ. Residues 84–119 are compositionally biased toward polar residues; sequence TWETNSSRSSTPWASEESQTSGVCSREGSTVNSPPG. A compositionally biased stretch (basic residues) spans 130-153; the sequence is KVRKRTHKSKHGSPSLRRKGNRKR. Phosphoserine is present on Ser155. Composition is skewed to polar residues over residues 156 to 177 and 341 to 350; these read FESQDVPTNKKGSPLTSASQVL and TVPSYSSSGR. Positions 489-499 are enriched in low complexity; it reads LEPSISLSEPL. Over residues 500-510 the composition is skewed to acidic residues; sequence MLEEPEKEEIE. A Phosphoserine modification is found at Ser631. Residues 640–659 show a composition bias toward low complexity; it reads AYSPAAAPTSESSLSPSTTE. 3 stretches are compositionally biased toward polar residues: residues 664-673, 692-701, and 752-775; these read NQSPLFSTVT, PDSTSASEYS, and PSLSPSTTEKTSECQSPLPSTATS. The span at 1049-1063 shows a compositional bias: polar residues; that stretch reads TAATPVSEQFSSSQK. A compositionally biased stretch (basic and acidic residues) spans 1085–1094; that stretch reads DKSEKAEIKP. Residues 1214 to 1223 show a composition bias toward polar residues; sequence QEATAHVSQD. Residues 1621–1630 show a composition bias toward basic and acidic residues; that stretch reads EPEKKDKPHQ. A compositionally biased stretch (polar residues) spans 1639–1662; sequence SEFSSDLGRQSGSIGTKQAKSPIT. Basic and acidic residues-rich tracts occupy residues 1668 to 1687, 1704 to 1714, and 1786 to 1795; these read VLEKGPAELRSREGKEENRE, LREESQNEEIK, and ILDKLSEETG. The segment covering 1796–1808 has biased composition (polar residues); sequence HPNSSQVLQSITE. Residues 1935–1955 are compositionally biased toward basic and acidic residues; that stretch reads SKDHTCEVRKQVLPHSAEESH. Positions 1956–1980 are enriched in polar residues; sequence LSSQEAVSALDTSSGNTETLSSKSY. A compositionally biased stretch (basic and acidic residues) spans 2085–2124; that stretch reads NEKEAHRSTPPFPEEKPLEESKMVQSKVIDDADEGKKPSP. A compositionally biased stretch (polar residues) spans 2145–2155; that stretch reads SPESPEVTQNP. 2 stretches are compositionally biased toward basic and acidic residues: residues 2162–2172 and 2232–2250; these read AKPDLPEEKGK and KPADHSLSEVKLKTADEPR. Over residues 2387 to 2399 the composition is skewed to polar residues; it reads QPKSASSNFASKN. Ser2404 bears the Phosphoserine mark. The span at 2441–2461 shows a compositional bias: basic and acidic residues; the sequence is ISEEETKLRSVSPTEKKDNLE. Composition is skewed to basic and acidic residues over residues 2661–2681, 2750–2769, and 2777–2804; these read KSSRDMPDHSEEKEQFRESEL, SSRDMPDHSEEKEQFKESEL, and ITKESMKEGFPSKESERTLARPFDETKS. Ser2813 carries the post-translational modification Phosphoserine. A compositionally biased stretch (basic and acidic residues) spans 2830–2847; it reads AVKKKEMPRSELTPERHT. Residues 2964–2988 are a coiled coil; the sequence is SIDQEESEQMQDKLEYLEEKASFKT. The span at 3015 to 3031 shows a compositional bias: basic and acidic residues; sequence PLKENKQKETHKTKEEI. 5 disordered regions span residues 3015-3037, 3119-3156, 3204-3231, 3386-3421, and 3465-3495; these read PLKENKQKETHKTKEEISTDSET, EKGHNILSHPETQSQNSADRNVSKDTKRDVDSKSPGMP, KKKEEETASEGDSVNSEASFPSRNSDTD, SGATHVQETSLEEPKILVPPEPSEERLRNSPVQDEY, and EFASEAEQSTPAEQKELGSERKEEDQLSSEV. A required for RYR2 clustering region spans residues 3052-3365; the sequence is YFEKYTLIDY…GSHGNEVGNA (314 aa). Polar residues predominate over residues 3128–3138; the sequence is PETQSQNSADR. Positions 3139 to 3150 are enriched in basic and acidic residues; that stretch reads NVSKDTKRDVDS. The span at 3213 to 3227 shows a compositional bias: polar residues; that stretch reads EGDSVNSEASFPSRN. Residue Ser3228 is modified to Phosphoserine. Over residues 3477–3489 the composition is skewed to basic and acidic residues; that stretch reads EQKELGSERKEED. An amphipathic helix H1 region spans residues 3517–3544; sequence KCPISATDKVFGTHKDHEVSTLDTAISA. Positions 3544-3653 form a coiled coil; that stretch reads AVKVQLAEFL…REAEELDEAV (110 aa). The interval 3545 to 3672 is B-box coiled-coil; BBC; that stretch reads VKVQLAEFLE…ERLLSAMEST (128 aa). Residues 3631–3648 are amphipathic helix H2; the sequence is SMDTAKDTLETIVREAEE. Fibronectin type-III domains lie at 3704–3805 and 3806–3898; these read VPQP…TAPS and TPVI…TRGT. An amphipathic helix H3 region spans residues 3751-3767; the sequence is EVNELVEEYRLTVKESY. One can recognise a B30.2/SPRY domain in the interval 3880 to 4065; sequence NAFGTSEQSE…LHLGIEPPDS (186 aa).

As to quaternary structure, interacts with PRKAR2A. Interacts with ACTN2 and DTNBP1/dysbindin. Interacts with DES. Interacts with DMD/dystrophin. Interacts with the calcineurin catalytic subunit PPP3CA. Interacts with TTN. Interacts with CAPN3; this interaction, which results in CMYA5 proteolysis, may protect CAPN3 from autolysis. Interacts with FSD2. Identified in a complex composed of FSD2, CMYA5 and RYR2. Phosphorylated by PKA. As to expression, expressed in skeletal muscle; at a strong level and in heart.

It localises to the nucleus. It is found in the sarcoplasmic reticulum. Its subcellular location is the cytoplasm. The protein resides in the perinuclear region. The protein localises to the myofibril. It localises to the sarcomere. It is found in the m line. Functionally, may serve as an anchoring protein that mediates the subcellular compartmentation of protein kinase A (PKA) via binding to PRKAR2A. May function as a repressor of calcineurin-mediated transcriptional activity. May attenuate calcineurin ability to induce slow-fiber gene program in muscle and may negatively modulate skeletal muscle regeneration. Plays a role in the assembly of ryanodine receptor (RYR2) clusters in striated muscle. The polypeptide is Cardiomyopathy-associated protein 5 (CMYA5) (Homo sapiens (Human)).